The sequence spans 117 residues: G antigen 6 (117 aa).

The disordered stretch occupies residues 1-117 (MSWRGRSTYY…PEEGEKQSQC (117 aa)). Composition is skewed to acidic residues over residues 32–45 (FSDEVEPATPEEGE) and 87–96 (ECEDGPDGQE). The segment covering 103–117 (EEVKTPEEGEKQSQC) has biased composition (basic and acidic residues).

It belongs to the GAGE family. Expressed in a variety of tumor tissues but not in normal tissues, except testis.

This is G antigen 6 (GAGE6) from Homo sapiens (Human).